We begin with the raw amino-acid sequence, 394 residues long: Potassium channel subfamily K member 3 (394 aa).

Residues 1–8 lie on the Cytoplasmic side of the membrane; sequence MKRQNVRT. Residues 9-29 form a helical membrane-spanning segment; the sequence is LALIVCTFTYLLVGAAVFDAL. N-linked (GlcNAc...) asparagine glycosylation occurs at asparagine 53. An intramembrane region (pore-forming) is located at residues 78–101; that stretch reads WRFAGSFYFAITVITTIGYGHAAP. 4 residues coordinate K(+): threonine 93, isoleucine 94, glycine 95, and tyrosine 96. Positions 93–98 are selectivity filter 1; sequence TIGYGH. Residues 108 to 128 traverse the membrane as a helical segment; it reads VFCMFYALLGIPLTLVMFQSL. Topologically, residues 129 to 158 are cytoplasmic; that stretch reads GERINTLVRYLLHRAKKGLGMRRADVSMAN. A helical membrane pass occupies residues 159-179; it reads MVLIGFFSCISTLCIGAAAFS. Residues 184–207 constitute an intramembrane region (pore-forming); it reads WTFFQAYYYCFITLTTIGFGDYVA. Residues threonine 199, isoleucine 200, glycine 201, and phenylalanine 202 each contribute to the K(+) site. The selectivity filter 2 stretch occupies residues 199–204; that stretch reads TIGFGD. Residues 223-243 traverse the membrane as a helical segment; it reads FSFVYILTGLTVIGAFLNLVV. The interval 243-248 is X-gate; the sequence is VLRFMT. At 244–394 the chain is on the cytoplasmic side; sequence LRFMTMNAED…RGLMKRRSSV (151 aa). 2 disordered regions span residues 266-286 and 338-357; these read RNGQAGGGGGGGSAHTTDTAS and TCVEQSHSSPGGGGRYSDTP. Residues 269-278 show a composition bias toward gly residues; that stretch reads QAGGGGGGGS.

Belongs to the two pore domain potassium channel (TC 1.A.1.8) family. Homodimer. Heterodimer with KCNK1. Heterodimer with KCNK9. In terms of tissue distribution, widespread expression in adult. Strongest expression in pancreas and placenta. Lower expression in brain, lung, prostate, heart, kidney, uterus, small intestine and colon.

It localises to the cell membrane. The enzyme catalyses K(+)(in) = K(+)(out). The catalysed reaction is Na(+)(in) = Na(+)(out). Inhibited by external acidification, diacylglycerol and anandamide. Activated by halothane and isoflurane. Functionally, k(+) channel that conducts voltage-dependent outward rectifying currents upon membrane depolarization. Voltage sensing is coupled to K(+) electrochemical gradient in an 'ion flux gating' mode where outward but not inward ion flow opens the gate. Changes ion selectivity and becomes permeable to Na(+) ions in response to extracellular acidification. Protonation of the pH sensor His-98 stabilizes C-type inactivation conformation likely converting the channel from outward K(+)-conducting, to inward Na(+)-conducting to nonconductive state. Homo- and heterodimerizes to form functional channels with distinct regulatory and gating properties. Allows K(+) currents with fast-gating kinetics important for the repolarization and hyperpolarization phases of action potentials. In cerebellar granule cells, heteromeric KCNK3:KCNK9 channel may hyperpolarize the resting membrane potential to limit intrinsic neuronal excitability, but once the action potential threshold is reached, it may support high-frequency action potential firing and increased neuronal excitability. Dispensable for central chemosensory respiration i.e. breathing controlled by brainstem CO2/pH, it rather conducts pH-sensitive currents and controls the firing rate of serotonergic raphe neurons involved in potentiation of the respiratory chemoreflex. Additionally, imparts chemosensitivity to type 1 cells in carotid bodies which respond to a decrease in arterial oxygen pressure or an increase in carbon dioxide pressure or pH to initiate adaptive changes in pulmonary ventilation. In adrenal gland, contributes to the maintenance of a hyperpolarized resting membrane potential of aldosterone-producing cells at zona glomerulosa and limits aldosterone release as part of a regulatory mechanism that controls arterial blood pressure and electrolyte homeostasis. In brown adipocytes, mediates K(+) efflux that counteracts norepinephrine-induced membrane depolarization, limits Ca(2+) efflux and downstream cAMP and PKA signaling, ultimately attenuating lipid oxidation and adaptive thermogenesis. In Homo sapiens (Human), this protein is Potassium channel subfamily K member 3.